Reading from the N-terminus, the 248-residue chain is 1-(5-phosphoribosyl)-5-[(5-phosphoribosylamino)methylideneamino] imidazole-4-carboxamide isomerase (248 aa).

Asp-8 functions as the Proton acceptor in the catalytic mechanism. The active-site Proton donor is Asp-131.

It belongs to the HisA/HisF family.

The protein resides in the cytoplasm. The catalysed reaction is 1-(5-phospho-beta-D-ribosyl)-5-[(5-phospho-beta-D-ribosylamino)methylideneamino]imidazole-4-carboxamide = 5-[(5-phospho-1-deoxy-D-ribulos-1-ylimino)methylamino]-1-(5-phospho-beta-D-ribosyl)imidazole-4-carboxamide. The protein operates within amino-acid biosynthesis; L-histidine biosynthesis; L-histidine from 5-phospho-alpha-D-ribose 1-diphosphate: step 4/9. The chain is 1-(5-phosphoribosyl)-5-[(5-phosphoribosylamino)methylideneamino] imidazole-4-carboxamide isomerase from Cupriavidus taiwanensis (strain DSM 17343 / BCRC 17206 / CCUG 44338 / CIP 107171 / LMG 19424 / R1) (Ralstonia taiwanensis (strain LMG 19424)).